Consider the following 137-residue polypeptide: MGSKNSASVALFFTLNILFFALVSSTEKCPDPYKPKPKPTPKPTPTPYPSAGKCPRDALKLGVCADVLNLVHNVVIGSPPTLPCCSLLEGLVNLEAAVCLCTAIKANILGKNLNLPIALSLVLNNCGKQVPNGFECT.

Residues 1–25 form the signal peptide; the sequence is MGSKNSASVALFFTLNILFFALVSS. Residues 30–53 are disordered; that stretch reads PDPYKPKPKPTPKPTPTPYPSAGK. Pro residues predominate over residues 38 to 48; the sequence is KPTPKPTPTPY. The chain crosses the membrane as a helical span at residues 88 to 104; the sequence is LEGLVNLEAAVCLCTAI.

The protein resides in the membrane. Its function is as follows. May be connected with the initiation of embryogenesis or with the metabolic changes produced by the removal of auxins. In Daucus carota (Wild carrot), this protein is 14 kDa proline-rich protein DC2.15.